The primary structure comprises 301 residues: Asialoglycoprotein receptor 2 (301 aa).

The tract at residues 1-29 (MEKDFQDIQQLDSEENDHQLIGDEEQGSH) is disordered. Topologically, residues 1–58 (MEKDFQDIQQLDSEENDHQLIGDEEQGSHVQNLRTENPRWGGQPPSRPFPQRLCSKFR) are cytoplasmic. Serine 13 carries the post-translational modification Phosphoserine. The S-palmitoyl cysteine moiety is linked to residue cysteine 54. The helical; Signal-anchor for type II membrane protein transmembrane segment at 59–79 (LSLLALAFNILLLVVICVVSS) threads the bilayer. Over 80–301 (QSMQLQKEFW…ACERKRDITY (222 aa)) the chain is Extracellular. Asparagine 97, asparagine 119, and asparagine 165 each carry an N-linked (GlcNAc...) asparagine glycan. Residues 169 to 295 (CCPVNWVEFG…QQVNRWACER (127 aa)) form the C-type lectin domain. Intrachain disulfides connect cysteine 170–cysteine 181, cysteine 198–cysteine 293, and cysteine 271–cysteine 285.

In terms of assembly, interacts with LASS2. As to expression, expressed exclusively in hepatic parenchymal cells.

The protein resides in the membrane. Functionally, mediates the endocytosis of plasma glycoproteins to which the terminal sialic acid residue on their complex carbohydrate moieties has been removed. The receptor recognizes terminal galactose and N-acetylgalactosamine units. After ligand binding to the receptor, the resulting complex is internalized and transported to a sorting organelle, where receptor and ligand are disassociated. The receptor then returns to the cell membrane surface. The polypeptide is Asialoglycoprotein receptor 2 (Asgr2) (Rattus norvegicus (Rat)).